A 217-amino-acid chain; its full sequence is Large ribosomal subunit protein uL29m (217 aa).

Belongs to the universal ribosomal protein uL29 family. As to quaternary structure, component of the mitochondrial large ribosomal subunit. Mature mitochondrial ribosomes consist of a small (37S) and a large (54S) subunit. The 37S subunit contains at least 33 different proteins and 1 molecule of RNA (15S). The 54S subunit contains at least 45 different proteins and 1 molecule of RNA (21S).

It localises to the mitochondrion. The sequence is that of Large ribosomal subunit protein uL29m (mrpl4) from Aspergillus clavatus (strain ATCC 1007 / CBS 513.65 / DSM 816 / NCTC 3887 / NRRL 1 / QM 1276 / 107).